The sequence spans 549 residues: Efflux pump patC (549 aa).

The span at 1–12 (MAESTAHTSPSL) shows a compositional bias: polar residues. The disordered stretch occupies residues 1 to 40 (MAESTAHTSPSLNDKEREVDQGILSDESGPAEEVKETPDQ). 14 consecutive transmembrane segments (helical) span residues 50-70 (LLIC…NTIV), 85-105 (AQLG…ILPL), 116-136 (WLFI…GGAP), 146-166 (VWAG…ITIL), 178-198 (LVGL…GAFA), 206-226 (WGFY…VFLL), 252-272 (VLSA…GVMW), 282-302 (LYVV…FCVL), 321-341 (IALY…VYYI), 360-380 (LLPF…LMPK), 385-405 (VLWY…MYTV), 419-439 (ILLG…PSLV), 460-482 (LLGL…NALL), and 526-546 (VYVM…FLPW).

The protein belongs to the major facilitator superfamily. TCR/Tet family.

Its subcellular location is the vacuole membrane. It is found in the cell membrane. Efflux pump; part of the gene cluster that mediates the biosynthesis of patulin, an acetate-derived tetraketide mycotoxin produced by several fungal species that shows antimicrobial properties against several bacteria. May be involved in the secretion of E-ascladiol to be converted to patulin by the secreted patulin synthase patE. This Aspergillus clavatus (strain ATCC 1007 / CBS 513.65 / DSM 816 / NCTC 3887 / NRRL 1 / QM 1276 / 107) protein is Efflux pump patC.